Consider the following 555-residue polypeptide: Gamma-aminobutyric acid receptor subunit alpha-4 (555 aa).

The N-terminal stretch at 1–35 (MVSAKKVPAIAMSFGVSFALLHFLCLAACLNESPG) is a signal peptide. At 36 to 259 (QNQKEEKLCP…FHLRRKMGYF (224 aa)) the chain is on the extracellular side. N-linked (GlcNAc...) asparagine glycosylation occurs at N47. R100 contacts 4-aminobutanoate. N-linked (GlcNAc...) asparagine glycans are attached at residues N144 and N157. Residue T163 participates in 4-aminobutanoate binding. C172 and C186 form a disulfide bridge. A helical membrane pass occupies residues 260–280 (MIQTYIPCIMTVILSQVSFWI). The Cytoplasmic segment spans residues 281-284 (NKES). Residues 285–305 (VPARTVFGITTVLTMTTLSIS) traverse the membrane as a helical segment. Over 306–318 (ARHSLPKVSYATA) the chain is Extracellular. Residues 319 to 341 (MDWFIAVCFAFVFSALIEFAAVN) form a helical membrane-spanning segment. The Cytoplasmic segment spans residues 342–518 (YFTNVQMEKA…PPPSGSGTSK (177 aa)). 2 disordered regions span residues 354–435 (KTSK…SPNP) and 495–516 (GTSGKLSATTTPSAPPPSGSGT). Residues 410 to 421 (SSKSSTVVQGSS) are compositionally biased toward low complexity. The span at 422 to 435 (EATPQSYLASSPNP) shows a compositional bias: polar residues. The helical transmembrane segment at 519 to 545 (IDKYARILFPVTFGAFNMVYWVVYLSK) threads the bilayer. At 546 to 555 (DTMEKSESLM) the chain is on the extracellular side.

It belongs to the ligand-gated ion channel (TC 1.A.9) family. Gamma-aminobutyric acid receptor (TC 1.A.9.5) subfamily. GABRA4 sub-subfamily. As to quaternary structure, heteropentamer, formed by a combination of alpha (GABRA1-6), beta (GABRB1-3), gamma (GABRG1-3), delta (GABRD), epsilon (GABRE), rho (GABRR1-3), pi (GABRP) and theta (GABRQ) chains, each subunit exhibiting distinct physiological and pharmacological properties. Expressed in the brain.

The protein resides in the cell membrane. The protein localises to the postsynaptic cell membrane. It catalyses the reaction chloride(in) = chloride(out). Potentiated by histamine. Alpha subunit of the heteropentameric ligand-gated chloride channel gated by gamma-aminobutyric acid (GABA), a major inhibitory neurotransmitter in the brain. GABA-gated chloride channels, also named GABA(A) receptors (GABAAR), consist of five subunits arranged around a central pore and contain GABA active binding site(s) located at the alpha and beta subunit interface(s). When activated by GABA, GABAARs selectively allow the flow of chloride anions across the cell membrane down their electrochemical gradient. GABAARs containing alpha-4 are predominantly extrasynaptic, contributing to tonic inhibition in dentate granule cells and thalamic relay neurons. Extrasynaptic alpha-4-containing GABAARs control levels of excitability and network activity. GABAARs containing alpha-4 are often found with the delta or gamma-2 subunits, in combination with beta subunits. GABAAR containing alpha-4-beta-3-delta subunits can simultaneously bind GABA and histamine where histamine binds at the interface of two neighboring beta subunits, which may be involved in the regulation of sleep and wakefulness. This Bos taurus (Bovine) protein is Gamma-aminobutyric acid receptor subunit alpha-4 (GABRA4).